The primary structure comprises 493 residues: Glutamate--tRNA ligase (493 aa).

The 'HIGH' region motif lies at 10 to 20; the sequence is PSPTGDPHVGT. The short motif at 251 to 255 is the 'KMSKS' region element; sequence KLSKR. Lys254 contributes to the ATP binding site.

The protein belongs to the class-I aminoacyl-tRNA synthetase family. Glutamate--tRNA ligase type 1 subfamily. Monomer.

It localises to the cytoplasm. It catalyses the reaction tRNA(Glu) + L-glutamate + ATP = L-glutamyl-tRNA(Glu) + AMP + diphosphate. Its function is as follows. Catalyzes the attachment of glutamate to tRNA(Glu) in a two-step reaction: glutamate is first activated by ATP to form Glu-AMP and then transferred to the acceptor end of tRNA(Glu). In Pseudomonas putida (strain ATCC 700007 / DSM 6899 / JCM 31910 / BCRC 17059 / LMG 24140 / F1), this protein is Glutamate--tRNA ligase.